A 375-amino-acid chain; its full sequence is Queuine tRNA-ribosyltransferase (375 aa).

Asp-90 functions as the Proton acceptor in the catalytic mechanism. Substrate-binding positions include 90–94 (DSGGF), Asp-144, Gln-190, and Gly-217. The segment at 248–254 (GIGTPHY) is RNA binding. The Nucleophile role is filled by Asp-267. The tract at residues 272–276 (ARITR) is RNA binding; important for wobble base 34 recognition. Positions 305, 307, 310, and 336 each coordinate Zn(2+).

Belongs to the queuine tRNA-ribosyltransferase family. In terms of assembly, homodimer. Within each dimer, one monomer is responsible for RNA recognition and catalysis, while the other monomer binds to the replacement base PreQ1. Zn(2+) serves as cofactor.

The enzyme catalyses 7-aminomethyl-7-carbaguanine + guanosine(34) in tRNA = 7-aminomethyl-7-carbaguanosine(34) in tRNA + guanine. It participates in tRNA modification; tRNA-queuosine biosynthesis. Functionally, catalyzes the base-exchange of a guanine (G) residue with the queuine precursor 7-aminomethyl-7-deazaguanine (PreQ1) at position 34 (anticodon wobble position) in tRNAs with GU(N) anticodons (tRNA-Asp, -Asn, -His and -Tyr). Catalysis occurs through a double-displacement mechanism. The nucleophile active site attacks the C1' of nucleotide 34 to detach the guanine base from the RNA, forming a covalent enzyme-RNA intermediate. The proton acceptor active site deprotonates the incoming PreQ1, allowing a nucleophilic attack on the C1' of the ribose to form the product. After dissociation, two additional enzymatic reactions on the tRNA convert PreQ1 to queuine (Q), resulting in the hypermodified nucleoside queuosine (7-(((4,5-cis-dihydroxy-2-cyclopenten-1-yl)amino)methyl)-7-deazaguanosine). The polypeptide is Queuine tRNA-ribosyltransferase (Borreliella burgdorferi (strain ATCC 35210 / DSM 4680 / CIP 102532 / B31) (Borrelia burgdorferi)).